The primary structure comprises 208 residues: Platelet glycoprotein Ib beta chain (208 aa).

A signal peptide spans M1–C26. Intrachain disulfides connect C26/C32 and C30/C39. Residues P27–V55 enclose the LRRNT domain. Topologically, residues P27–C147 are extracellular. Residues L60–T83 form an LRR repeat. A glycan (N-linked (GlcNAc...) asparagine) is linked at N66. An LRRCT domain is found at N89–P143. 2 disulfides stabilise this stretch: C93/C118 and C95/C141. A helical membrane pass occupies residues W148–L172. Residues C173 to S208 lie on the Cytoplasmic side of the membrane. S193 carries the post-translational modification Phosphoserine; by PKA. Position 195 is a phosphothreonine (T195).

As to quaternary structure, two GP-Ib beta are disulfide-linked to one GP-Ib alpha. GP-IX is complexed with the GP-Ib heterodimer via a non covalent linkage. Interacts with TRAF4.

Its subcellular location is the membrane. Its function is as follows. Gp-Ib, a surface membrane protein of platelets, participates in the formation of platelet plugs by binding to von Willebrand factor, which is already bound to the subendothelium. In Papio cynocephalus (Yellow baboon), this protein is Platelet glycoprotein Ib beta chain (GP1BB).